The following is a 288-amino-acid chain: Diaminopimelate epimerase (288 aa).

Positions 14 and 67 each coordinate substrate. The active-site Proton donor is the Cys76. Residues 77-78 (GN), Asn166, Asn199, and 217-218 (ER) contribute to the substrate site. Cys226 functions as the Proton acceptor in the catalytic mechanism. 227 to 228 (GT) lines the substrate pocket.

The protein belongs to the diaminopimelate epimerase family. Homodimer.

Its subcellular location is the cytoplasm. It carries out the reaction (2S,6S)-2,6-diaminopimelate = meso-2,6-diaminopimelate. The protein operates within amino-acid biosynthesis; L-lysine biosynthesis via DAP pathway; DL-2,6-diaminopimelate from LL-2,6-diaminopimelate: step 1/1. Functionally, catalyzes the stereoinversion of LL-2,6-diaminopimelate (L,L-DAP) to meso-diaminopimelate (meso-DAP), a precursor of L-lysine and an essential component of the bacterial peptidoglycan. The chain is Diaminopimelate epimerase from Bacillus anthracis (strain A0248).